Reading from the N-terminus, the 274-residue chain is Elongation factor Ts (274 aa).

Positions 79–82 are involved in Mg(2+) ion dislocation from EF-Tu; it reads TDFV.

The protein belongs to the EF-Ts family.

It is found in the cytoplasm. Associates with the EF-Tu.GDP complex and induces the exchange of GDP to GTP. It remains bound to the aminoacyl-tRNA.EF-Tu.GTP complex up to the GTP hydrolysis stage on the ribosome. The protein is Elongation factor Ts of Azobacteroides pseudotrichonymphae genomovar. CFP2.